The chain runs to 781 residues: Pyrin (781 aa).

In terms of domain architecture, Pyrin spans 1–92; sequence MAKTPSDHLL…AEELHRAAIQ (92 aa). Residues 93–111 show a composition bias toward polar residues; that stretch reads EYSTQENGTDDSAASSSLG. The disordered stretch occupies residues 93 to 226; it reads EYSTQENGTD…AGGAPGQKEC (134 aa). Residues 113–126 show a composition bias toward basic and acidic residues; sequence NKPRSLKTPDHPEG. Residues 153–163 show a composition bias toward basic residues; the sequence is LSRKPLSKRRE. Ser-242 bears the Phosphoserine mark. The tract at residues 266 to 280 is interaction with RELA; the sequence is KTAANLDSATEPRAR. Disordered stretches follow at residues 270 to 322 and 336 to 373; these read NLDS…EGDP and EAVS…QPLP. The segment at 370-412 adopts a B box-type zinc-finger fold; the sequence is QPLPQCKRHLKQVQLLFCEDHDEPICLICSLSQEHQGHRVRPI. Positions 413 to 442 form a coiled coil; sequence EEVALEHKKKIQKQLEHLKKLRKSGEEQRS. The short motif at 420–437 is the Nuclear localization signal element; the sequence is KKKIQKQLEHLKKLRKSG. A required for homotrimerization and induction of pyroptosomes region spans residues 420 to 582; that stretch reads KKKIQKQLEH…YFSETLRSEM (163 aa). The region spanning 580 to 775 is the B30.2/SPRY domain; the sequence is SEMEMFNVPE…NTAPLTICPV (196 aa).

As to quaternary structure, homotrimer. Interacts (via the B box-type zinc finger) with PSTPIP1. Interacts (via the B30.2/SPRY domain) with several components of the inflammasome complex, including CASP1 p20 and p10 subunits, CASP5, PYCARD, NLRP1, NLRP2 and NLRP3, as well as with unprocessed IL1B; this interaction may lead to autophagic degradation of these proteins. Component of the AIM2 PANoptosome complex, a multiprotein complex that drives inflammatory cell death (PANoptosis). Interacts with NFKBIA and RELA. Interacts weakly with VASP and ACTR3. Interacts with active ULK1 (phosphorylated on 'Ser-317') and BECN1 simultaneously. Also interacts with ATG16L1 (via WD repeats), and with ATG8 family members, including GABARAP, GABARAPL1 and, to a lesser extent, GABARAPL2, MAP1LC3A/LC3A and MAP1LC3C/LC3C. Interacts with TRIM21. Interacts with YWHAB, YWHAE, YWHAG, YWHAH, YWHAQ and YWHAZ; the interaction is required for the down-regulation of pyrin pro-inflammatory activity. Cleaved by CASP1. The N-terminal cleavage product localizes to the nucleus as a filamentous network and to the cytoplasm, interacts more strongly with RELA and NFKBIA than the full-length protein, enhances the nuclear localization of RELA and induces NFKBIA proteolysis. The C-terminal cleavage product localizes to the cytoplasm. In terms of processing, phosphorylation at Ser-242 is required for the interaction with 14-3-3 proteins and down-regulation of pyrin pro-inflammatory activity. Post-translationally, degraded along with the delivery of its substrates to autolysosomal compartments (at protein level). In terms of tissue distribution, expressed in peripheral blood leukocytes, particularly in mature granulocytes and to a lesser extent in monocytes but not in lymphocytes. Detected in spleen, lung and muscle, probably as a result of leukocyte infiltration in these tissues. Not expressed in thymus, prostate, testis, ovary, small intestine, colon, heart, brain, placenta, liver, kidney, pancreas. Expression detected in several myeloid leukemic, colon cancer, and prostate cancer cell lines.

Its subcellular location is the cytoplasm. It localises to the cytoskeleton. The protein localises to the cell projection. It is found in the ruffle. The protein resides in the lamellipodium. Its subcellular location is the nucleus. It localises to the cytoplasmic vesicle. The protein localises to the autophagosome. Involved in the regulation of innate immunity and the inflammatory response in response to IFNG/IFN-gamma. Organizes autophagic machinery by serving as a platform for the assembly of ULK1, Beclin 1/BECN1, ATG16L1, and ATG8 family members and recognizes specific autophagy targets, thus coordinating target recognition with assembly of the autophagic apparatus and initiation of autophagy. Acts as an autophagy receptor for the degradation of several inflammasome components, including CASP1, NLRP1 and NLRP3, hence preventing excessive IL1B- and IL18-mediated inflammation. However, it can also have a positive effect in the inflammatory pathway, acting as an innate immune sensor that triggers PYCARD/ASC specks formation, caspase-1 activation, and IL1B and IL18 production. Together with AIM2, also acts as a mediator of pyroptosis, necroptosis and apoptosis (PANoptosis), an integral part of host defense against pathogens, in response to bacterial infection. It is required for PSTPIP1-induced PYCARD/ASC oligomerization and inflammasome formation. Recruits PSTPIP1 to inflammasomes, and is required for PSTPIP1 oligomerization. This chain is Pyrin, found in Homo sapiens (Human).